The following is a 617-amino-acid chain: tRNA uridine 5-carboxymethylaminomethyl modification enzyme MnmG (617 aa).

Residues 9-14 (GAGHAG), Val121, and Thr176 contribute to the FAD site. 269–283 (GPRYCPSIEDKFVRF) serves as a coordination point for NAD(+). Position 366 (Gln366) interacts with FAD.

This sequence belongs to the MnmG family. Homodimer. Heterotetramer of two MnmE and two MnmG subunits. Requires FAD as cofactor.

The protein localises to the cytoplasm. NAD-binding protein involved in the addition of a carboxymethylaminomethyl (cmnm) group at the wobble position (U34) of certain tRNAs, forming tRNA-cmnm(5)s(2)U34. This chain is tRNA uridine 5-carboxymethylaminomethyl modification enzyme MnmG, found in Acholeplasma laidlawii (strain PG-8A).